The following is a 499-amino-acid chain: Na(+)/H(+) antiporter NhaB (499 aa).

Helical transmembrane passes span 38 to 58 (VSPF…LAMA), 62 to 82 (YPLQ…LTSA), 89 to 109 (VLAN…IYFM), 128 to 148 (LLLS…LDAL), 149 to 169 (TVTA…HRFA), 204 to 224 (LIMH…VGEP), 242 to 262 (LVMA…CAIL), 310 to 330 (VLVF…LLII), 349 to 369 (FEEA…VAVI), 393 to 413 (MFFV…VATV), 449 to 469 (ATPN…APLI), and 478 to 498 (IMAL…VILF).

This sequence belongs to the NhaB Na(+)/H(+) (TC 2.A.34) antiporter family.

The protein resides in the cell inner membrane. The enzyme catalyses 2 Na(+)(in) + 3 H(+)(out) = 2 Na(+)(out) + 3 H(+)(in). Na(+)/H(+) antiporter that extrudes sodium in exchange for external protons. The chain is Na(+)/H(+) antiporter NhaB from Saccharophagus degradans (strain 2-40 / ATCC 43961 / DSM 17024).